We begin with the raw amino-acid sequence, 652 residues long: Probable endo-1,3(4)-beta-glucanase AFUB_029980 (652 aa).

A signal peptide spans 1–21; the sequence is MAPSSLLLSVGSLITSSLVSA. A GH16 domain is found at 36 to 289; that stretch reads ESWQGESFIN…WAGNVFAEST (254 aa). A glycan (N-linked (GlcNAc...) asparagine) is linked at Asn64. Residue Glu145 is the Nucleophile of the active site. The active-site Proton donor is Glu150. N-linked (GlcNAc...) asparagine glycans are attached at residues Asn200 and Asn208. A disordered region spans residues 379-423; that stretch reads NTVATSAADHATPSSAETTTVPAATGAPSVSATEGGDSELESTST. Residues 390–410 are compositionally biased toward polar residues; it reads TPSSAETTTVPAATGAPSVSA. N-linked (GlcNAc...) asparagine glycosylation occurs at Asn453. A disordered region spans residues 509–551; sequence SEIPTAPPEPVSQAVSTGSFDDSDTAQGDSEEQGSIASASVAP. Residues 529-540 are compositionally biased toward acidic residues; it reads DDSDTAQGDSEE. A lipid anchor (GPI-anchor amidated asparagine) is attached at Asn630. Positions 631–652 are cleaved as a propeptide — removed in mature form; that stretch reads GANRMSVGLSGLIGVMFIAALA.

Belongs to the glycosyl hydrolase 16 family.

The protein localises to the cell membrane. It carries out the reaction Endohydrolysis of (1-&gt;3)- or (1-&gt;4)-linkages in beta-D-glucans when the glucose residue whose reducing group is involved in the linkage to be hydrolyzed is itself substituted at C-3.. Its function is as follows. Mixed-linked glucanase involved in the degradation of complex natural cellulosic substrates. The protein is Probable endo-1,3(4)-beta-glucanase AFUB_029980 of Aspergillus fumigatus (strain CBS 144.89 / FGSC A1163 / CEA10) (Neosartorya fumigata).